We begin with the raw amino-acid sequence, 180 residues long: NADH-quinone oxidoreductase subunit I (180 aa).

2 consecutive 4Fe-4S ferredoxin-type domains span residues 50–80 and 90–119; these read LTRN…LQKS and KFFR…LMPD. Residues cysteine 60, cysteine 63, cysteine 66, cysteine 70, cysteine 99, cysteine 102, cysteine 105, and cysteine 109 each contribute to the [4Fe-4S] cluster site.

Belongs to the complex I 23 kDa subunit family. NDH-1 is composed of 13 different subunits. Subunits NuoA, H, J, K, L, M, N constitute the membrane sector of the complex. [4Fe-4S] cluster serves as cofactor.

Its subcellular location is the cell membrane. The enzyme catalyses a quinone + NADH + 5 H(+)(in) = a quinol + NAD(+) + 4 H(+)(out). Its function is as follows. NDH-1 shuttles electrons from NADH, via FMN and iron-sulfur (Fe-S) centers, to quinones in the respiratory chain. The immediate electron acceptor for the enzyme in this species is believed to be ubiquinone. Couples the redox reaction to proton translocation (for every two electrons transferred, four hydrogen ions are translocated across the cytoplasmic membrane), and thus conserves the redox energy in a proton gradient. The sequence is that of NADH-quinone oxidoreductase subunit I from Buchnera aphidicola subsp. Acyrthosiphon pisum (strain APS) (Acyrthosiphon pisum symbiotic bacterium).